The following is a 77-amino-acid chain: MLAKTGDVVVQKVPVIRLSVFLHFFFVFPFCLLHRLYMGMKQVQEFIMEPKGSVFVVRATLRVSLENAGKIFFNETE.

A helical transmembrane segment spans residues 13 to 33; that stretch reads VPVIRLSVFLHFFFVFPFCLL.

The protein resides in the membrane. This is an uncharacterized protein from Saccharomyces cerevisiae (strain ATCC 204508 / S288c) (Baker's yeast).